A 159-amino-acid chain; its full sequence is Ribosomal RNA large subunit methyltransferase H (159 aa).

Residues L76, G108, and 127 to 132 (MSKMTF) contribute to the S-adenosyl-L-methionine site.

It belongs to the RNA methyltransferase RlmH family. As to quaternary structure, homodimer.

The protein localises to the cytoplasm. It catalyses the reaction pseudouridine(1915) in 23S rRNA + S-adenosyl-L-methionine = N(3)-methylpseudouridine(1915) in 23S rRNA + S-adenosyl-L-homocysteine + H(+). In terms of biological role, specifically methylates the pseudouridine at position 1915 (m3Psi1915) in 23S rRNA. The protein is Ribosomal RNA large subunit methyltransferase H of Ureaplasma parvum serovar 3 (strain ATCC 27815 / 27 / NCTC 11736).